The sequence spans 362 residues: Alpha-tubulin N-acetyltransferase (362 aa).

In terms of domain architecture, N-acetyltransferase spans M1–I177. Acetyl-CoA contacts are provided by residues F111–T124 and S147–K156.

This sequence belongs to the acetyltransferase ATAT1 family.

It carries out the reaction L-lysyl-[alpha-tubulin] + acetyl-CoA = N(6)-acetyl-L-lysyl-[alpha-tubulin] + CoA + H(+). Functionally, specifically acetylates 'Lys-40' in alpha-tubulin on the lumenal side of microtubules. Promotes microtubule destabilization and accelerates microtubule dynamics; this activity may be independent of acetylation activity. Acetylates alpha-tubulin with a slow enzymatic rate, due to a catalytic site that is not optimized for acetyl transfer. Enters the microtubule through each end and diffuses quickly throughout the lumen of microtubules. Acetylates only long/old microtubules because of its slow acetylation rate since it does not have time to act on dynamically unstable microtubules before the enzyme is released. In Giardia intestinalis (strain ATCC 50803 / WB clone C6) (Giardia lamblia), this protein is Alpha-tubulin N-acetyltransferase.